The sequence spans 126 residues: Large ribosomal subunit protein bL20c (126 aa).

Belongs to the bacterial ribosomal protein bL20 family.

It is found in the plastid. The protein localises to the chloroplast. Functionally, binds directly to 23S ribosomal RNA and is necessary for the in vitro assembly process of the 50S ribosomal subunit. It is not involved in the protein synthesizing functions of that subunit. In Guizotia abyssinica (Niger), this protein is Large ribosomal subunit protein bL20c.